The chain runs to 467 residues: Spermatogenesis- and oogenesis-specific basic helix-loop-helix-containing protein 2 (467 aa).

Residues 200 to 251 enclose the bHLH domain; the sequence is QASFLHSTKEKLRRERIKSCCEQLRTLLPYVKGRKSDVASVIEATVDYVKQV. A compositionally biased stretch (low complexity) spans 443–453; sequence ASASDHQASQP. Residues 443–467 are disordered; it reads ASASDHQASQPPALPSPQPHDSSYF.

Forms both hetero- and homodimers with SOHLH1. As to expression, preferentially expressed in the adult ovary and testis. Expressed in the majority of spermatogonia in adult animals, but not in the most undifferentiated spermatogonial population.

It localises to the nucleus. The protein resides in the cytoplasm. Transcription regulator of both male and female germline differentiation. Suppresses genes involved in spermatogonial stem cells maintenance, and induces genes important for spermatogonial differentiation. Coordinates oocyte differentiation without affecting meiosis I. The polypeptide is Spermatogenesis- and oogenesis-specific basic helix-loop-helix-containing protein 2 (Sohlh2) (Mus musculus (Mouse)).